A 394-amino-acid polypeptide reads, in one-letter code: Ribose-phosphate pyrophosphokinase 5, chloroplastic (394 aa).

The N-terminal 33 residues, 1 to 33 (MASIVQPSPTFPALNLRRSSLIRPPSSVRFPLK), are a transit peptide targeting the chloroplast. Mg(2+)-binding residues include D202, H204, D213, and D217. The binding of phosphoribosylpyrophosphate stretch occupies residues 288–303 (GKVAIMVDDMIDTAGT).

Belongs to the ribose-phosphate pyrophosphokinase family.

It localises to the plastid. The protein resides in the chloroplast. The enzyme catalyses D-ribose 5-phosphate + ATP = 5-phospho-alpha-D-ribose 1-diphosphate + AMP + H(+). The polypeptide is Ribose-phosphate pyrophosphokinase 5, chloroplastic (PRS5) (Arabidopsis thaliana (Mouse-ear cress)).